The sequence spans 158 residues: 2-C-methyl-D-erythritol 2,4-cyclodiphosphate synthase (158 aa).

Positions 8 and 10 each coordinate a divalent metal cation. Residues 8–10 (DVH) and 34–35 (HS) each bind 4-CDP-2-C-methyl-D-erythritol 2-phosphate. A divalent metal cation is bound at residue His42. 4-CDP-2-C-methyl-D-erythritol 2-phosphate-binding positions include 56 to 58 (DIG), 61 to 65 (FPDTD), 100 to 106 (AQAPKMA), 132 to 135 (TTSE), Phe139, and Arg142.

The protein belongs to the IspF family. As to quaternary structure, homotrimer. Requires a divalent metal cation as cofactor.

It catalyses the reaction 4-CDP-2-C-methyl-D-erythritol 2-phosphate = 2-C-methyl-D-erythritol 2,4-cyclic diphosphate + CMP. Its pathway is isoprenoid biosynthesis; isopentenyl diphosphate biosynthesis via DXP pathway; isopentenyl diphosphate from 1-deoxy-D-xylulose 5-phosphate: step 4/6. Its function is as follows. Involved in the biosynthesis of isopentenyl diphosphate (IPP) and dimethylallyl diphosphate (DMAPP), two major building blocks of isoprenoid compounds. Catalyzes the conversion of 4-diphosphocytidyl-2-C-methyl-D-erythritol 2-phosphate (CDP-ME2P) to 2-C-methyl-D-erythritol 2,4-cyclodiphosphate (ME-CPP) with a corresponding release of cytidine 5-monophosphate (CMP). The chain is 2-C-methyl-D-erythritol 2,4-cyclodiphosphate synthase from Aliivibrio fischeri (strain ATCC 700601 / ES114) (Vibrio fischeri).